We begin with the raw amino-acid sequence, 144 residues long: Cytochrome c oxidase subunit 4 isoform 1, mitochondrial (144 aa).

Topologically, residues 1–73 are mitochondrial matrix; it reads SVVKSEDYAL…SFAEMNRGSN (73 aa). The residue at position 4 (K4) is an N6-acetyllysine; alternate. K4 bears the N6-succinyllysine; alternate mark. S31 and S33 each carry phosphoserine. The residue at position 35 (K35) is an N6-acetyllysine; alternate. K35 carries the N6-succinyllysine; alternate modification. K42 bears the N6-acetyllysine mark. The helical transmembrane segment at 74–99 threads the bilayer; sequence EWKTVVGAAMFFIGFTAILIILEKRY. Topologically, residues 100–144 are mitochondrial intermembrane; the sequence is VYGPLPHTFDKEWVAMQTKRMLDLKVNPVDGLASKWDYDKKEWKK.

The protein belongs to the cytochrome c oxidase IV family. In terms of assembly, component of the cytochrome c oxidase (complex IV, CIV), a multisubunit enzyme composed of 14 subunits. The complex is composed of a catalytic core of 3 subunits MT-CO1, MT-CO2 and MT-CO3, encoded in the mitochondrial DNA, and 11 supernumerary subunits COX4I, COX5A, COX5B, COX6A, COX6B, COX6C, COX7A, COX7B, COX7C, COX8 and NDUFA4, which are encoded in the nuclear genome. The complex exists as a monomer or a dimer and forms supercomplexes (SCs) in the inner mitochondrial membrane with NADH-ubiquinone oxidoreductase (complex I, CI) and ubiquinol-cytochrome c oxidoreductase (cytochrome b-c1 complex, complex III, CIII), resulting in different assemblies (supercomplex SCI(1)III(2)IV(1) and megacomplex MCI(2)III(2)IV(2)). Interacts with PHB2; the interaction decreases in absence of SPHK2. Interacts with AFG1L. Interacts with ABCB7; this interaction allows the regulation of cellular iron homeostasis and cellular reactive oxygen species (ROS) levels in cardiomyocytes. Interacts with FLVCR2; this interaction occurs in the absence of heme and is disrupted upon heme binding. Interacts with IRGC.

Its subcellular location is the mitochondrion inner membrane. It participates in energy metabolism; oxidative phosphorylation. In terms of biological role, component of the cytochrome c oxidase, the last enzyme in the mitochondrial electron transport chain which drives oxidative phosphorylation. The respiratory chain contains 3 multisubunit complexes succinate dehydrogenase (complex II, CII), ubiquinol-cytochrome c oxidoreductase (cytochrome b-c1 complex, complex III, CIII) and cytochrome c oxidase (complex IV, CIV), that cooperate to transfer electrons derived from NADH and succinate to molecular oxygen, creating an electrochemical gradient over the inner membrane that drives transmembrane transport and the ATP synthase. Cytochrome c oxidase is the component of the respiratory chain that catalyzes the reduction of oxygen to water. Electrons originating from reduced cytochrome c in the intermembrane space (IMS) are transferred via the dinuclear copper A center (CU(A)) of subunit 2 and heme A of subunit 1 to the active site in subunit 1, a binuclear center (BNC) formed by heme A3 and copper B (CU(B)). The BNC reduces molecular oxygen to 2 water molecules using 4 electrons from cytochrome c in the IMS and 4 protons from the mitochondrial matrix. This is Cytochrome c oxidase subunit 4 isoform 1, mitochondrial (COX4I1) from Aotus azarae (Azara's night monkey).